The chain runs to 297 residues: HTH-type transcriptional regulator ArgP (297 aa).

In terms of domain architecture, HTH lysR-type spans 4–60 (PDYRTLQALDAVIRERGFERAAQKLCITQSAVSQRIKQLENMFGQPLLVRTVPPRPT). The H-T-H motif DNA-binding region spans 21–40 (FERAAQKLCITQSAVSQRIK).

Belongs to the LysR transcriptional regulatory family. As to quaternary structure, homodimer.

Its function is as follows. Controls the transcription of genes involved in arginine and lysine metabolism. This chain is HTH-type transcriptional regulator ArgP, found in Klebsiella pneumoniae (strain 342).